The following is a 441-amino-acid chain: Bacteria-responsive protein 1 (441 aa).

The first 18 residues, M1–A18, serve as a signal peptide directing secretion. N-linked (GlcNAc...) asparagine glycosylation occurs at N20. The GH18 domain maps to P25–L441. C29 and C56 form a disulfide bridge. N-linked (GlcNAc...) asparagine glycosylation is present at N225.

It belongs to the glycosyl hydrolase 18 family. IDGF subfamily. Salivary gland (at protein level).

It localises to the secreted. Promotes recruitment of host neutrophils at the bite site. Induces expression of IL1B and IL6 in the skin of the host. In terms of biological role, (Microbial infection) Enhances Zika virus replication and exacerbates disease pathogenesis in the host. This chain is Bacteria-responsive protein 1, found in Aedes aegypti (Yellowfever mosquito).